The following is a 235-amino-acid chain: Zinc transporter ZIP9 (235 aa).

An N-linked (GlcNAc...) asparagine glycan is attached at Asn-2. 4 consecutive transmembrane segments (helical) span residues 11 to 31 (SCVP…CWWT), 75 to 95 (TTTL…GAAA), 104 to 124 (LIVF…LVSF), and 138 to 158 (HLLV…LGLS). A glycan (N-linked (GlcNAc...) asparagine) is linked at Asn-169. 2 helical membrane passes run 172 to 192 (GMAM…HVLP) and 214 to 234 (LEVA…VGHQ).

This sequence belongs to the ZIP transporter (TC 2.A.5) family.

Its subcellular location is the golgi apparatus. It is found in the trans-Golgi network membrane. The protein resides in the cell membrane. The protein localises to the cytoplasm. It localises to the perinuclear region. Its subcellular location is the mitochondrion. It is found in the nucleus. The enzyme catalyses Zn(2+)(in) = Zn(2+)(out). Functionally, transports zinc ions across cell and organelle membranes into the cytoplasm and regulates intracellular zinc homeostasis. Participates in the zinc ions efflux out of the secretory compartments. Regulates intracellular zinc level, resulting in the enhancement of AKT1 and MAPK3/MAPK1 (Erk1/2) phosphorylation in response to the BCR activation. Also functions as a membrane androgen receptor that mediates, through a G protein, the non-classical androgen signaling pathway, characterized by the activation of MAPK3/MAPK1 (Erk1/2) and transcription factors CREB1 or ATF1. This pathway contributes to CLDN1 and CLDN5 expression and tight junction formation between adjacent Sertoli cells. Mediates androgen-induced vascular endothelial cell proliferation through activation of an inhibitory G protein leading to the AKT1 and MAPK3/MAPK1 (Erk1/2) activation which in turn modulate inhibition (phosphorylation) of GSK3B and CCND1 transcription. Moreover, has dual functions as a membrane-bound androgen receptor and as an androgen-dependent zinc transporter both of which are mediated through an inhibitory G protein (Gi) that mediates both MAP kinase and zinc signaling leading to the androgen-dependent apoptotic process. This is Zinc transporter ZIP9 from Macaca fascicularis (Crab-eating macaque).